The chain runs to 1905 residues: Microtubule cross-linking factor 1 (1905 aa).

Residues 1–249 (METLNGPAGG…SSDREPPRGA (249 aa)) form a necessary for colocalization and binding with microtubules region. The disordered stretch occupies residues 1–329 (METLNGPAGG…SLGEQSRLVP (329 aa)). Residues 1–508 (METLNGPAGG…QDDSADLRCQ (508 aa)) are necessary for self-assembly, microtubule bundling activity and apicobasal microtubule organization. The span at 22–40 (QHHRHHHLHPVAERRRLHR) shows a compositional bias: basic residues. Composition is skewed to low complexity over residues 63 to 95 (VPSS…AAPG) and 115 to 130 (AGAR…LGSR). Residues Ser77 and Ser87 each carry the phosphoserine modification. 3 positions are modified to phosphoserine: Ser217, Ser221, and Ser263. Positions 268-283 (ALLAAPLAAGACPGGR) are enriched in low complexity. Coiled-coil stretches lie at residues 330 to 404 (AAEE…EQKS), 432 to 483 (SVRL…SSLK), and 513 to 718 (KEEA…LQHE). 5 disordered regions span residues 544 to 563 (YGDV…PSTR), 601 to 631 (DMRG…LESS), 671 to 694 (FEPP…GAPL), 737 to 800 (LRAP…SEPC), and 842 to 867 (AGLR…GDQQ). At Ser549 the chain carries Phosphoserine. Basic and acidic residues predominate over residues 601–616 (DMRGQQEREGPGRDHA). Residue Ser618 is modified to Phosphoserine. At Thr621 the chain carries Phosphothreonine. Positions 680–692 (LGEGASPGAGGGA) are enriched in gly residues. Phosphoserine is present on Ser685. Residues 741 to 770 (SPRDSDAESDAGKKESDGEESRLPQPKREG) show a composition bias toward basic and acidic residues. Position 776 is a phosphoserine (Ser776). Residues 857 to 866 (GEEEQGEGDQ) are compositionally biased toward acidic residues. Ser901, Ser923, Lys941, and Thr975 each carry phosphoserine. The segment at 1080 to 1100 (GVQGGHQADGPDHDSDRGCGF) is disordered. Coiled-coil stretches lie at residues 1143 to 1201 (KALL…ELGS) and 1238 to 1278 (EKNW…KENS). The interval 1265–1382 (EFLWRIEQLQ…EENHKGNLQR (118 aa)) is necessary for interaction with MARK2 and apicobasal microtubule bundle formation in polarized epithelial cells. Ser1278 carries the phosphoserine modification. A disordered region spans residues 1346–1384 (ALSLDDEPEEPPAHRPEREFRNRLPEEEENHKGNLQRAV). Over residues 1356-1377 (PPAHRPEREFRNRLPEEEENHK) the composition is skewed to basic and acidic residues. 3 positions are modified to phosphoserine: Ser1385, Ser1388, and Ser1399. Thr1417 carries the post-translational modification Phosphothreonine. Ser1421 bears the Phosphoserine mark. A Phosphotyrosine modification is found at Tyr1427. The interval 1485-1505 (DTMTSPEHCQKQPLRSHVLTE) is disordered. Residues Ser1514, Ser1523, Ser1561, Ser1578, Ser1583, Ser1592, and Ser1661 each carry the phosphoserine modification. Positions 1524–1569 (ITAAGGEGPFPTSRARGSPGDTKGGPPEPMLSRWPCTSPRHSRDYV) are disordered. Disordered regions lie at residues 1655 to 1689 (GSGV…SRQV), 1707 to 1756 (PKYG…PVHT), 1782 to 1842 (GLRA…APPG), and 1863 to 1905 (KEER…PWGL). A phosphothreonine mark is found at Thr1667 and Thr1675. A compositionally biased stretch (low complexity) spans 1678–1687 (SSPSRSLRSR). The necessary for colocalization and binding with microtubules stretch occupies residues 1678 to 1773 (SSPSRSLRSR…SLFNIIDHSP (96 aa)). Residues Ser1679 and Ser1683 each carry the phosphoserine modification. Residues 1744-1756 (ARSTTTRESPVHT) are compositionally biased toward polar residues. Phosphoserine is present on residues Ser1791, Ser1808, Ser1812, and Ser1814.

This sequence belongs to the SOGA family. As to quaternary structure, homodimer. Associates (via N- and C-terminus domains) with microtubule filaments. In terms of assembly, interacts with MARK2; the interaction is direct. Post-translationally, phosphorylated during mitosis in a CDK1-dependent manner.

The protein resides in the lateral cell membrane. The protein localises to the apical cell membrane. It is found in the cytoplasm. It localises to the cytoskeleton. Its subcellular location is the spindle pole. The protein resides in the midbody. Its function is as follows. Microtubule-associated factor involved in the late phase of epithelial polarization and microtubule dynamics regulation. Plays a role in the development and maintenance of non-centrosomal microtubule bundles at the lateral membrane in polarized epithelial cells. Required for faithful chromosome segregation during mitosis. This is Microtubule cross-linking factor 1 (MTCL1) from Homo sapiens (Human).